Here is a 296-residue protein sequence, read N- to C-terminus: Lipoyl synthase (296 aa).

Cys-37, Cys-42, Cys-48, Cys-63, Cys-67, Cys-70, and Ser-276 together coordinate [4Fe-4S] cluster. The Radical SAM core domain maps to 49 to 265 (WSKKHTTVMI…ERVAKTKGFL (217 aa)).

It belongs to the radical SAM superfamily. Lipoyl synthase family. Requires [4Fe-4S] cluster as cofactor.

It is found in the cytoplasm. The enzyme catalyses [[Fe-S] cluster scaffold protein carrying a second [4Fe-4S](2+) cluster] + N(6)-octanoyl-L-lysyl-[protein] + 2 oxidized [2Fe-2S]-[ferredoxin] + 2 S-adenosyl-L-methionine + 4 H(+) = [[Fe-S] cluster scaffold protein] + N(6)-[(R)-dihydrolipoyl]-L-lysyl-[protein] + 4 Fe(3+) + 2 hydrogen sulfide + 2 5'-deoxyadenosine + 2 L-methionine + 2 reduced [2Fe-2S]-[ferredoxin]. Its pathway is protein modification; protein lipoylation via endogenous pathway; protein N(6)-(lipoyl)lysine from octanoyl-[acyl-carrier-protein]: step 2/2. Catalyzes the radical-mediated insertion of two sulfur atoms into the C-6 and C-8 positions of the octanoyl moiety bound to the lipoyl domains of lipoate-dependent enzymes, thereby converting the octanoylated domains into lipoylated derivatives. The chain is Lipoyl synthase from Rickettsia massiliae (strain Mtu5).